A 600-amino-acid polypeptide reads, in one-letter code: Proton channel OTOP1 (600 aa).

The interval 1-50 (MPGGPGAPSSPAASSGSSRAAPSGIAACPLSPPPLARGSPQASGPRRGAS) is disordered. Over 1–56 (MPGGPGAPSSPAASSGSSRAAPSGIAACPLSPPPLARGSPQASGPRRGASVPQKLA) the chain is Cytoplasmic. The span at 7 to 27 (APSSPAASSGSSRAAPSGIAA) shows a compositional bias: low complexity. Residues 57-78 (ETLSSQYGLNVFVAGLLFLLAW) form a helical membrane-spanning segment. Residues 79–86 (AVHATGVG) lie on the Extracellular side of the membrane. Residues 87 to 110 (KSDLLCVLTALMLLQLLWMLWYVG) traverse the membrane as a helical segment. Topologically, residues 111-128 (RSYMQRRLIRPKDTHAGA) are cytoplasmic. A helical transmembrane segment spans residues 129 to 151 (RWLRGSITLFAFITVVLGCLKVA). Residues 152-161 (YFIGFSECLS) are Extracellular-facing. Residues 162–186 (ATEGVFPVTHAVHTLLQVYFLWGHA) traverse the membrane as a helical segment. Over 187–194 (KDIIMSFK) the chain is Cytoplasmic. The helical transmembrane segment at 195 to 217 (TLERFGVIHSVFTNLLLWANSVL) threads the bilayer. At 218-262 (NESKHQLNEHKERLITLGFGNITIVLDDHTPQCNCTPPALCSALS) the chain is on the extracellular side. The helical transmembrane segment at 263 to 288 (HGIYYLYPFNIEYQILASTMLYVLWK) threads the bilayer. Topologically, residues 289–309 (NIGRRVDSSQHQKMQCRFDGV) are cytoplasmic. Residues 310 to 332 (LVGSVLGLTVLAATIAVVVVYMI) form a helical membrane-spanning segment. Over 333–342 (HIGRSKSKSE) the chain is Extracellular. A helical transmembrane segment spans residues 343-368 (SALIMFYLYAITVLLLMGAAGLVGSW). The Cytoplasmic segment spans residues 369–386 (IYRVDEKSLDESKNPARK). A helical membrane pass occupies residues 387-411 (LDVDLLVATGSGSWLLSWGSILAIA). Topologically, residues 412–421 (CAETRPPYTW) are extracellular. The helical transmembrane segment at 422-442 (YNLPYSVLVIVEKYVQNIFII) threads the bilayer. Topologically, residues 443–532 (ESVHLEPEGV…QGGMKRRLLR (90 aa)) are cytoplasmic. The helical transmembrane segment at 533-551 (NITAFLFLCNISLWIPPAF) threads the bilayer. Over 552–569 (GCRPEYDNGLEEIVFGFE) the chain is Extracellular. The chain crosses the membrane as a helical span at residues 570–593 (PWIIVVNLAMPFSIFYRMHAAAAL). At 594–600 (FEVYCKI) the chain is on the cytoplasmic side.

The protein belongs to the otopetrin family. Homodimer. Interacts with STAT1, independently of STAT1 phosphorylation status. In terms of tissue distribution, expressed in thymus, heart, kidney, skin, vestibular system of the inner ear, sour taste cells, heart, uterus, dorsal root ganglion, adrenal gland, lactating mammary gland and stimulated mast cells. In the inner ear, expressed in the supporting cells in extrastriolar regions of the saccule and in the utricle, but not in the cochlea. Expressed in brown adipose tissue. Expressed in epididymal white adipose tissue (eWAT), as well as in inguinal fat, in obese animals, but hardly detectable in eWAT from lean mice. Expressed in acid-sensing taste receptor cells (PKD2L1-positive cells), but not in other types of taste cells (at protein level).

Its subcellular location is the cell membrane. It is found in the cell projection. It localises to the microvillus. The enzyme catalyses H(+)(in) = H(+)(out). Its activity is regulated as follows. Activated by both acid and alkali, with proton influx in response to extracellular acid and proton efflux during alkali stimulation. Inhibited by Zn(2+); this inhibition is thought to be pH-sensitive. Currents evoked in response to mild acid (pH 6.0) stimulus may also be mildly potentiated by exposure to Zn(2+). Activated by NH(4)Cl. Functionally, proton-selective ion channel. Biphasically modulated by acid and alkali, mediating proton influx and efflux in response to extracellular acid and base stimulation, respectively. Sour taste receptor, which carries inward currents in response to extracellular acidification. Sensor for ammonium chloride (NH(4)Cl) in taste receptor cells. NH(4)Cl acts by increasing the intracellular pH, thereby generating a driving force for proton entry through OTOP1 channel. Might also participate in alkaline sensation. Plays a role in the regulation of Ca(2+) flux in response to purigenic (ATP, ADP and UDP) stimuli, leading to increase in cytosolic Ca(2+) due to influx of extracellular calcium. May play this role by inhibiting P2Y purinoceptor-mediated Ca(2+) release in a Ca(2+)-dependent manner and promote an influx of Ca(2+) in response to ATP. Through this mechanism and possibly others, plays a role in the formation and function of calcium carbonate-based structures in the vestibular system of the inner ear, called otoconia, that sense gravity and linear acceleration. In obesity, may attenuate adipose tissue inflammation, through the negative regulation of IFNG signaling, hence may play an adaptive role in the maintainance of metabolic homeostasis. Following alkali activation, may also be permeable Na(+), K(+), Cs(+) and Li(+). This chain is Proton channel OTOP1, found in Mus musculus (Mouse).